We begin with the raw amino-acid sequence, 358 residues long: Phospho-N-acetylmuramoyl-pentapeptide-transferase (358 aa).

The next 10 helical transmembrane spans lie at 13 to 47 (LFILNTFALIVTSYLFNNFIFTGVYILFFFISIFI), 81 to 101 (MGGIFMIIPFLILLLIITINL), 106 to 126 (LILLLLTVFGFFITGFLDDYL), 148 to 168 (ISIIFILLAYEKNLISPLITI), 171 to 191 (SWAINMNIFILPVAFLVLVGI), 201 to 221 (LDGLAAGCSGIVFYGLGTEIL), 228 to 248 (LFVFSILCFSMSGICLGFLKY), 255 to 275 (IFMGDTGSLSIGAILGSIALL), 278 to 298 (SIFTLSIFSGIFIIESLSVII), and 336 to 356 (IVENFWKINILLVILGIVLKI).

It belongs to the glycosyltransferase 4 family. MraY subfamily. Mg(2+) is required as a cofactor.

Its subcellular location is the cell inner membrane. It catalyses the reaction UDP-N-acetyl-alpha-D-muramoyl-L-alanyl-gamma-D-glutamyl-meso-2,6-diaminopimeloyl-D-alanyl-D-alanine + di-trans,octa-cis-undecaprenyl phosphate = di-trans,octa-cis-undecaprenyl diphospho-N-acetyl-alpha-D-muramoyl-L-alanyl-D-glutamyl-meso-2,6-diaminopimeloyl-D-alanyl-D-alanine + UMP. It functions in the pathway cell wall biogenesis; peptidoglycan biosynthesis. Its function is as follows. Catalyzes the initial step of the lipid cycle reactions in the biosynthesis of the cell wall peptidoglycan: transfers peptidoglycan precursor phospho-MurNAc-pentapeptide from UDP-MurNAc-pentapeptide onto the lipid carrier undecaprenyl phosphate, yielding undecaprenyl-pyrophosphoryl-MurNAc-pentapeptide, known as lipid I. The sequence is that of Phospho-N-acetylmuramoyl-pentapeptide-transferase from Prochlorococcus marinus (strain MIT 9301).